A 595-amino-acid polypeptide reads, in one-letter code: Protein LUTEIN DEFICIENT 5, chloroplastic (595 aa).

A chloroplast-targeting transit peptide spans 1-28; it reads MAMAFPLSYTPTITVKPVTYSRRSNFVV. Cysteine 516 provides a ligand contact to heme.

The protein belongs to the cytochrome P450 family. The cofactor is heme.

The protein resides in the plastid. Its subcellular location is the chloroplast. Its function is as follows. Heme-containing cytochrome P450 involved in the biosynthesis of xanthophylls. Specific for beta-ring hydroxylation of alpha- and beta-carotene. Also has a low activity toward the epsilon-rings of alpha-carotene. The beta-ring of alpha-carotene is the preferred substrate in planta. This Arabidopsis thaliana (Mouse-ear cress) protein is Protein LUTEIN DEFICIENT 5, chloroplastic (CYP97A3).